Here is a 603-residue protein sequence, read N- to C-terminus: F-box only protein 46 (603 aa).

Residues 20–54 are disordered; it reads YSQNQPRPPSATLKPPVCPDTSSGTEPDHRPAHLE. Residues S21 and S67 each carry the phosphoserine modification. Disordered regions lie at residues 111–163, 235–301, 332–359, and 396–442; these read GGSR…PTSS, EAQR…TRAK, EASE…ARDC, and TVSP…GTTD. At T347 the chain carries Phosphothreonine. The span at 347-356 shows a compositional bias: pro residues; that stretch reads TPPAPPPPPA. Residues 470 to 522 enclose the F-box domain; that stretch reads RQYMLLLPEHVLVKIFSFLPTRALAALKCTCHHFKGIIEAFGVRATDSRWSRD.

Part of a SCF (SKP1-cullin-F-box) protein ligase complex SCF(FBXO46) composed of CUL1, SKP1, RBX1 and FBXO46. Phosphorylated by ATM in response to DNA damage, promoting ubiquitination and degradation by the SCF(FBXO31) complex. Post-translationally, ATM-phosphorylated FBXO46 is ubiquitinated and degradaded by the SCF(FBXO31) complex in response to DNA damage.

It participates in protein modification; protein ubiquitination. In terms of biological role, substrate-recognition component of the SCF(FBXO46) protein ligase complex, which mediates the ubiquitination and degradation of target proteins. In absence of stress, the SCF(FBXO46) complex catalyzes ubiquitination and degradation of MTOR-phosphorylated FBXO31. This chain is F-box only protein 46 (Fbxo46), found in Rattus norvegicus (Rat).